Here is a 205-residue protein sequence, read N- to C-terminus: Spermatogenesis-associated protein 24 (205 aa).

The stretch at 17 to 167 forms a coiled coil; it reads LAFDQLRDVI…QKQNFRNHIS (151 aa). Residues 138 to 185 form a required for interaction with CBX5 and TBPL1 region; it reads EDILNGKENEIKELQQVISQQKQNFRNHISDFRIQKQQETYMAQVLDQ. The interval 185-205 is disordered; the sequence is QKRKKATGMRRARSRQCSREK. The segment covering 186 to 205 has biased composition (basic residues); sequence KRKKATGMRRARSRQCSREK.

The protein belongs to the SPATA24 family. As to quaternary structure, homodimer. Interacts with CBX3, CBX5, GMNN, GTF2B, TBPL1 and the polycomb proteins PHCF2, RNF2 and SCMH1 but not with CBX1 or PCGF2. As to expression, testis-specific (at protein level).

Its subcellular location is the cytoplasm. It localises to the nucleus. It is found in the nucleolus. The protein localises to the nucleoplasm. Functionally, binds DNA with high affinity but does not bind to TATA boxes. Synergises with GMNN and TBP in activation of TATA box-containing promoters and with GMNN and TBPL1 in activation of the NF1 TATA-less promoter. May play a role in cytoplasm movement and removal during spermiogenesis. The protein is Spermatogenesis-associated protein 24 (Spata24) of Mus musculus (Mouse).